We begin with the raw amino-acid sequence, 364 residues long: Chorismate synthase (364 aa).

A disordered region spans residues Met-41–Arg-60. Residues Arg-48 and Arg-54 each coordinate NADP(+). Residues Arg-125–Ser-127, Asn-238–Ala-239, Gly-278, Lys-293–Ser-297, and Arg-319 each bind FMN.

This sequence belongs to the chorismate synthase family. In terms of assembly, homotetramer. The cofactor is FMNH2.

The catalysed reaction is 5-O-(1-carboxyvinyl)-3-phosphoshikimate = chorismate + phosphate. It participates in metabolic intermediate biosynthesis; chorismate biosynthesis; chorismate from D-erythrose 4-phosphate and phosphoenolpyruvate: step 7/7. Its function is as follows. Catalyzes the anti-1,4-elimination of the C-3 phosphate and the C-6 proR hydrogen from 5-enolpyruvylshikimate-3-phosphate (EPSP) to yield chorismate, which is the branch point compound that serves as the starting substrate for the three terminal pathways of aromatic amino acid biosynthesis. This reaction introduces a second double bond into the aromatic ring system. The polypeptide is Chorismate synthase (Shewanella baltica (strain OS223)).